We begin with the raw amino-acid sequence, 487 residues long: Aspartyl/glutamyl-tRNA(Asn/Gln) amidotransferase subunit B (487 aa).

This sequence belongs to the GatB/GatE family. GatB subfamily. As to quaternary structure, heterotrimer of A, B and C subunits.

It carries out the reaction L-glutamyl-tRNA(Gln) + L-glutamine + ATP + H2O = L-glutaminyl-tRNA(Gln) + L-glutamate + ADP + phosphate + H(+). The enzyme catalyses L-aspartyl-tRNA(Asn) + L-glutamine + ATP + H2O = L-asparaginyl-tRNA(Asn) + L-glutamate + ADP + phosphate + 2 H(+). Allows the formation of correctly charged Asn-tRNA(Asn) or Gln-tRNA(Gln) through the transamidation of misacylated Asp-tRNA(Asn) or Glu-tRNA(Gln) in organisms which lack either or both of asparaginyl-tRNA or glutaminyl-tRNA synthetases. The reaction takes place in the presence of glutamine and ATP through an activated phospho-Asp-tRNA(Asn) or phospho-Glu-tRNA(Gln). This is Aspartyl/glutamyl-tRNA(Asn/Gln) amidotransferase subunit B from Acidiphilium cryptum (strain JF-5).